The chain runs to 340 residues: GTPase Obg (340 aa).

An Obg domain is found at 1–159; the sequence is MKFLDQAKVY…RTLWLRLKLI (159 aa). The region spanning 160-327 is the OBG-type G domain; that stretch reads ADAGIIGLPN…LLRAGAHIIE (168 aa). Residues 166–173, 191–195, 212–215, 279–282, and 308–310 each bind GTP; these read GLPNAGKS, FTTLY, DIPG, SQID, and SAV. 2 residues coordinate Mg(2+): Ser173 and Thr193.

Belongs to the TRAFAC class OBG-HflX-like GTPase superfamily. OBG GTPase family. Monomer. Mg(2+) serves as cofactor.

It localises to the cytoplasm. Its function is as follows. An essential GTPase which binds GTP, GDP and possibly (p)ppGpp with moderate affinity, with high nucleotide exchange rates and a fairly low GTP hydrolysis rate. Plays a role in control of the cell cycle, stress response, ribosome biogenesis and in those bacteria that undergo differentiation, in morphogenesis control. This Bartonella henselae (strain ATCC 49882 / DSM 28221 / CCUG 30454 / Houston 1) (Rochalimaea henselae) protein is GTPase Obg.